The primary structure comprises 546 residues: MKSHHQSHSSTSSKAHDSASCSQSQGGFSQPQGTPSQLHELSQYQGSSSSSTGTVPSSSQSSHSSSGTLSSLETVSTQELCSIPEDQEPEEPGPAPWARLWALQDGFSNLDCVNDNYWFGRDKSCEYCFDGPLLRRTDKYRTYSKKHFRIFREMGPKNCYIVYIEDHSGNGTFVNTELIGKGKRCPLSNNSEIALSLCRNKVFVFFDLTVDDQSVYPKELRDEYIMSKTLGSGACGEVKMAFERKTCQKVAIKIISKRRFALGSSREADTAPSVETEIEILKKLNHPCIIKIKDVFDAEDYYIVLELMEGGELFDRVVGNKRLKEATCKLYFYQMLVAVQYLHENGIIHRDLKPENVLLSSQEEDCLIKITDFGQSKILGETSLMRTLCGTPTYLAPEVLVSNGTAGYSRAVDCWSLGVILFICLSGYPPFSEHKTQVSLKDQITSGKYNFIPEVWTDVSEEALDLVKKLLVVDPKARLTTEEALNHPWLQDEYMKKKFQDLLVQEKNSVTLPVAPAQTSSQKRPLELEVEGMPSTKRLSVCGAVL.

The disordered stretch occupies residues 1–70; it reads MKSHHQSHSS…SSHSSSGTLS (70 aa). Residues 8-70 show a composition bias toward low complexity; sequence HSSTSSKAHD…SSHSSSGTLS (63 aa). At T68 the chain carries Phosphothreonine; by MAP3K20. At S71 the chain carries Phosphoserine; by PLK3. T77 is subject to Phosphothreonine; by ATM and MAP3K20. A Phosphoserine; by PLK3 modification is found at S82. One can recognise an FHA domain in the interval 117–179; that stretch reads YWFGRDKSCE…NGTFVNTELI (63 aa). Residues 224–490 enclose the Protein kinase domain; the sequence is YIMSKTLGSG…TEEALNHPWL (267 aa). ATP is bound by residues 231-238, K253, and 306-312; these read GSGACGEV and ELMEGGE. D351 serves as the catalytic Proton acceptor. ATP is bound by residues 355-356 and D372; that span reads EN. The T-loop/activation segment stretch occupies residues 372–398; the sequence is DFGQSKILGETSLMRTLCGTPTYLAPE. S383 is subject to Phosphoserine; by autocatalysis. Phosphothreonine; by autocatalysis occurs at positions 387 and 391. Residue S460 is modified to Phosphoserine.

This sequence belongs to the protein kinase superfamily. CAMK Ser/Thr protein kinase family. CHK2 subfamily. As to quaternary structure, homodimer. Homodimerization is part of the activation process but the dimer may dissociate following activation. Interacts with PML. Interacts with TP53. Interacts with RB1; phosphorylates RB1. Interacts with BRCA1. Interacts (phosphorylated at Thr-68) with MDC1; requires ATM-mediated phosphorylation of CHEK2. Interacts with TP53BP1; modulates CHEK2 phosphorylation at Thr-68 in response to ionizing radiation. Interacts with CDC25A; phosphorylates CDC25A and mediates its degradation in response to ionizing radiation. Interacts with CUL1; mediates CHEK2 ubiquitination and regulation. Interacts with CDKN2AIP. Interacts (via protein kinase domain) with CCAR2 (via N-terminus). Interacts with SIRT1. It depends on Mg(2+) as a cofactor. Post-translationally, phosphorylated. Phosphorylated at Ser-82 by PLK3 in response to DNA damage, promoting phosphorylation at Thr-77 by ATM and the G2/M transition checkpoint. Phosphorylation at Thr-77 induces homodimerization. Autophosphorylates at Thr-387 and Thr-391 in the T-loop/activation segment upon dimerization to become fully active. DNA damage-induced autophosphorylation at Ser-383 induces CUL1-mediated ubiquitination and regulates the pro-apoptotic function. Phosphorylation at Ser-460 also regulates ubiquitination. Phosphorylated by PLK4. In terms of processing, ubiquitinated. CUL1-mediated ubiquitination regulates the pro-apoptotic function. Ubiquitination may also regulate protein stability. Ubiquitinated by RNF8 via 'Lys-48'-linked ubiquitination. As to expression, ubiquitously expressed with higher levels in the thymus, spleen and colon (at protein level).

The protein resides in the nucleus. Its subcellular location is the PML body. It localises to the nucleoplasm. The catalysed reaction is L-seryl-[protein] + ATP = O-phospho-L-seryl-[protein] + ADP + H(+). It catalyses the reaction L-threonyl-[protein] + ATP = O-phospho-L-threonyl-[protein] + ADP + H(+). Activated through phosphorylation at Thr-68 by ATM in response to DNA double-strand breaks. Activation is modulated by several mediators including MDC1 and TP53BP1. Induces homodimerization with exchange of the T-loop/activation segment between protomers and transphosphorylation of the protomers. The autophosphorylated kinase dimer is fully active. Negatively regulated by PPM1D through dephosphorylation of Thr-68. Functionally, serine/threonine-protein kinase which is required for checkpoint-mediated cell cycle arrest, activation of DNA repair and apoptosis in response to the presence of DNA double-strand breaks. May also negatively regulate cell cycle progression during unperturbed cell cycles. Following activation, phosphorylates numerous effectors preferentially at the consensus sequence [L-X-R-X-X-S/T]. Regulates cell cycle checkpoint arrest through phosphorylation of CDC25A, CDC25B and CDC25C, inhibiting their activity. Inhibition of CDC25 phosphatase activity leads to increased inhibitory tyrosine phosphorylation of CDK-cyclin complexes and blocks cell cycle progression. May also phosphorylate NEK6 which is involved in G2/M cell cycle arrest. Regulates DNA repair through phosphorylation of BRCA2, enhancing the association of RAD51 with chromatin which promotes DNA repair by homologous recombination. Also stimulates the transcription of genes involved in DNA repair (including BRCA2) through the phosphorylation and activation of the transcription factor FOXM1. Regulates apoptosis through the phosphorylation of p53/TP53, MDM4 and PML. Phosphorylation of p53/TP53 at 'Ser-20' by CHEK2 may alleviate inhibition by MDM2, leading to accumulation of active p53/TP53. Phosphorylation of MDM4 may also reduce degradation of p53/TP53. Also controls the transcription of pro-apoptotic genes through phosphorylation of the transcription factor E2F1. Tumor suppressor, it may also have a DNA damage-independent function in mitotic spindle assembly by phosphorylating BRCA1. Its absence may be a cause of the chromosomal instability observed in some cancer cells. Promotes the CCAR2-SIRT1 association and is required for CCAR2-mediated SIRT1 inhibition. Under oxidative stress, promotes ATG7 ubiquitination by phosphorylating the E3 ubiquitin ligase TRIM32 at 'Ser-56' leading to positive regulation of the autophagosme assembly. This Mus musculus (Mouse) protein is Serine/threonine-protein kinase Chk2.